A 988-amino-acid chain; its full sequence is Protein argonaute 10 (988 aa).

A compositionally biased stretch (basic and acidic residues) spans 1–11 (MPIRQMKDSSE). Positions 1-103 (MPIRQMKDSS…PPSQTTSSAV (103 aa)) are disordered. Low complexity predominate over residues 41 to 57 (PVTVTTPATVTQSQASS). A compositionally biased stretch (basic residues) spans 64–73 (NRSRRRNRGG). In terms of domain architecture, PAZ spans 338–451 (PVIEFVAQLL…LPMEACKIVE (114 aa)). The Piwi domain maps to 625–946 (LLLAILPDNN…AAFRARFYLE (322 aa)).

This sequence belongs to the argonaute family. Ago subfamily. Interacts with GATA18/HAN and KNAT1/BP. Interacts with RICE1 and RICE2 that act as cofactors. Expressed in roots, stems, leaves, developing embryo, siliques, inflorescences, provascular tissue, shoot apical meristem (SAM) and adaxial (upper) sides of lateral organ primordia. Observed in the floral meristem, the adaxial side of sepal primordia, and the provascular tissue.

The protein resides in the cytoplasm. Functionally, involved in RNA-mediated post-transcriptional gene silencing (PTGS). Main component of the RNA-induced silencing complex (RISC) that binds to a short guide RNA such as a microRNA (miRNA) or small interfering RNA (siRNA). RISC uses the mature miRNA or siRNA as a guide for slicer-directed cleavage of homologous mRNAs to repress gene expression. Required for reliable formation of primary and axillary shoot apical meristems. Specifies leaf adaxial identity by repressing the miR165 and miR166 microRNAs in the embryonic shoot apex, in the shoot apical meristem (SAM) and leaf. Represses the microRNA miR398 which targets CCS1 chaperone mRNAs for translational inhibition. Acts as a negative regulator of AGO1 protein level. Like AGO1, is required for stem cell function and organ polarity. Unlike AGO1, is not subjected to small RNA-mediated repression itself. Essential for multiple processes in development. Coregulates, with GATA18/HAN, the shoot apical meristem (SAM) organization. This chain is Protein argonaute 10, found in Arabidopsis thaliana (Mouse-ear cress).